We begin with the raw amino-acid sequence, 289 residues long: Purine nucleoside phosphorylase (289 aa).

Position 1 is an N-acetylmethionine (Met-1). Phosphate is bound by residues Ser-33, His-64, and 84–86 (RFH). Tyr-88 is a binding site for a purine D-ribonucleoside. A phosphate-binding site is contributed by Ala-116. A purine D-ribonucleoside is bound by residues Glu-201 and Met-219. Ser-220 contacts phosphate. The a purine D-ribonucleoside site is built by Asn-243 and His-257.

The protein belongs to the PNP/MTAP phosphorylase family. As to quaternary structure, homotrimer.

Its subcellular location is the cytoplasm. It carries out the reaction inosine + phosphate = alpha-D-ribose 1-phosphate + hypoxanthine. The catalysed reaction is guanosine + phosphate = alpha-D-ribose 1-phosphate + guanine. The enzyme catalyses 2'-deoxyguanosine + phosphate = 2-deoxy-alpha-D-ribose 1-phosphate + guanine. It catalyses the reaction 2'-deoxyinosine + phosphate = 2-deoxy-alpha-D-ribose 1-phosphate + hypoxanthine. It functions in the pathway purine metabolism; purine nucleoside salvage. Its function is as follows. Catalyzes the phosphorolytic breakdown of the N-glycosidic bond in the beta-(deoxy)ribonucleoside molecules, with the formation of the corresponding free purine bases and pentose-1-phosphate. Preferentially acts on 6-oxopurine nucleosides including inosine and guanosine. This is Purine nucleoside phosphorylase (Pnp) from Mus musculus (Mouse).